A 251-amino-acid chain; its full sequence is Cell division protein ZapD (251 aa).

Belongs to the ZapD family. As to quaternary structure, interacts with FtsZ.

It is found in the cytoplasm. Functionally, cell division factor that enhances FtsZ-ring assembly. Directly interacts with FtsZ and promotes bundling of FtsZ protofilaments, with a reduction in FtsZ GTPase activity. This is Cell division protein ZapD from Burkholderia cenocepacia (strain ATCC BAA-245 / DSM 16553 / LMG 16656 / NCTC 13227 / J2315 / CF5610) (Burkholderia cepacia (strain J2315)).